A 354-amino-acid chain; its full sequence is MPGGRDPMPSHTMELPRLIVIGEGNMGDLGPFLGSLGGPRTVSLISGRTVQGATGRKIEGSLKRSGIKWSWHMAGTNDPESIASVQEAVRSDESGMAVGIGGGRAVDTAKMAAFKLGIPFVSVPTAASHDGIASPFVSIKGDKPHSITATAPLGVFVDIGVIRKAPARLLASGCGDLVANMIAVRDWELGRDRKGEYYGRYAASLALMSAKIVMENAARFAREGVDERVVVEALISAGVASCIAGSSRPCSGAEHLFSHALDRIAPGAGLHGEKCGIGSIMMAKLQGQDWKGIAGALKSVGAPTTARQIGLDREDLIEALMTAQGLRPERYTILEEAGMSRRRAAALARVTGVA.

NAD(+) contacts are provided by residues 103–107 (GRAVD) and 125–128 (TAAS). Aspartate 130 is a substrate binding site. Serine 134 is a binding site for NAD(+). Aspartate 176 is a binding site for substrate. The Zn(2+) site is built by aspartate 176 and histidine 255. Histidine 259 is a substrate binding site. Histidine 271 contacts Zn(2+).

This sequence belongs to the glycerol-1-phosphate dehydrogenase family. Homodimer. Zn(2+) serves as cofactor.

It is found in the cytoplasm. It carries out the reaction sn-glycerol 1-phosphate + NAD(+) = dihydroxyacetone phosphate + NADH + H(+). It catalyses the reaction sn-glycerol 1-phosphate + NADP(+) = dihydroxyacetone phosphate + NADPH + H(+). It participates in membrane lipid metabolism; glycerophospholipid metabolism. In terms of biological role, catalyzes the NAD(P)H-dependent reduction of dihydroxyacetonephosphate (DHAP or glycerone phosphate) to glycerol 1-phosphate (G1P). The G1P thus generated is used as the glycerophosphate backbone of phospholipids in the cellular membranes of Archaea. The protein is Glycerol-1-phosphate dehydrogenase [NAD(P)+] of Cenarchaeum symbiosum (strain A).